The chain runs to 385 residues: A-type ATP synthase subunit C (385 aa).

This sequence belongs to the V-ATPase V0D/AC39 subunit family. In terms of assembly, has multiple subunits with at least A(3), B(3), C, D, E, F, H, I and proteolipid K(x).

It is found in the cell membrane. Component of the A-type ATP synthase that produces ATP from ADP in the presence of a proton gradient across the membrane. The chain is A-type ATP synthase subunit C from Methanosphaera stadtmanae (strain ATCC 43021 / DSM 3091 / JCM 11832 / MCB-3).